Here is a 692-residue protein sequence, read N- to C-terminus: Formate hydrogenlyase transcriptional activator (692 aa).

Residues 202–344 enclose the GAF domain; the sequence is DIDELVSEVA…QIAERVAIAV (143 aa). In terms of domain architecture, Sigma-54 factor interaction spans 381–610; the sequence is IIGRSEAMYN…LENVVERAVL (230 aa). Residues 409 to 416 and 472 to 481 each bind ATP; these read GETGTGKE and ADKSSLFLDE. The H-T-H motif DNA-binding region spans 663–682; it reads PKGAAQRLGLKRTTLLSRMK.

Its function is as follows. Required for induction of expression of the formate dehydrogenase H and hydrogenase-3 structural genes. The protein is Formate hydrogenlyase transcriptional activator (fhlA) of Salmonella typhimurium (strain SL1344).